We begin with the raw amino-acid sequence, 804 residues long: Protein-lysine N-methyltransferase SMYD4 (804 aa).

Residue 112–114 (RSA) participates in S-adenosyl-L-methionine binding. Positions 233 to 574 (SSVGLCIDPL…KGQEILHCYG (342 aa)) constitute an SET domain. The Zn(2+) site is built by cysteine 296, cysteine 299, cysteine 309, cysteine 312, cysteine 318, cysteine 322, histidine 331, and cysteine 335. The MYND-type zinc-finger motif lies at 296–335 (CHRCLKHTLATVPCDGCSYAKYCSQECLQQAWELYHRTEC). Residues asparagine 427, 539-540 (NH), tyrosine 573, and phenylalanine 595 contribute to the S-adenosyl-L-methionine site.

This sequence belongs to the class V-like SAM-binding methyltransferase superfamily. In terms of assembly, interacts (via MYND-type zinc finger) with HDAC1.

The protein resides in the nucleus. It localises to the cytoplasm. It catalyses the reaction L-lysyl-[protein] + S-adenosyl-L-methionine = N(6)-methyl-L-lysyl-[protein] + S-adenosyl-L-homocysteine + H(+). In terms of biological role, protein-lysine N-methyltransferase. Monomethylates PRMT5, modulating its transcriptional activity. May also act as a histone methyltransferase. Plays a critical role in cardiac development. Acts as a key epigenetic regulator of gene expression during cardiac development via its dual activities as a methyltransferase and negative regulator of HDAC1. This chain is Protein-lysine N-methyltransferase SMYD4 (SMYD4), found in Pongo abelii (Sumatran orangutan).